The primary structure comprises 359 residues: Phosphate acyltransferase (359 aa).

Residues 337–359 (AAGAAQPAPETEVPGAHPSPHVA) are disordered.

This sequence belongs to the PlsX family. As to quaternary structure, homodimer. Probably interacts with PlsY.

It localises to the cytoplasm. It catalyses the reaction a fatty acyl-[ACP] + phosphate = an acyl phosphate + holo-[ACP]. The protein operates within lipid metabolism; phospholipid metabolism. Catalyzes the reversible formation of acyl-phosphate (acyl-PO(4)) from acyl-[acyl-carrier-protein] (acyl-ACP). This enzyme utilizes acyl-ACP as fatty acyl donor, but not acyl-CoA. The polypeptide is Phosphate acyltransferase (Cupriavidus necator (strain ATCC 17699 / DSM 428 / KCTC 22496 / NCIMB 10442 / H16 / Stanier 337) (Ralstonia eutropha)).